Here is a 73-residue protein sequence, read N- to C-terminus: MSCCGGSCGCGSGCKCGSGCGGCGMYPDLESTTTFTIIEGVAPMKNYGVAEKATEGGNGCKCGSNCTCDPCNC.

This sequence belongs to the metallothionein superfamily. Type 15 family.

Functionally, metallothioneins have a high content of cysteine residues that bind various heavy metals. The polypeptide is Metallothionein-like protein type 2 (Solanum lycopersicum (Tomato)).